The chain runs to 83 residues: MNKAPINLQDTFLNQVRKENMPVTIYLVNGFQLKGLVRGFDNFTVVIEFEGKQQMVYKHAISTVMPLRPINLVAASQSSTEER.

The region spanning 10–70 is the Sm domain; it reads DTFLNQVRKE…ISTVMPLRPI (61 aa).

The protein belongs to the Hfq family. Homohexamer.

RNA chaperone that binds small regulatory RNA (sRNAs) and mRNAs to facilitate mRNA translational regulation in response to envelope stress, environmental stress and changes in metabolite concentrations. Also binds with high specificity to tRNAs. In Desulfitobacterium hafniense (strain DSM 10664 / DCB-2), this protein is RNA-binding protein Hfq.